Consider the following 199-residue polypeptide: Superoxide dismutase [Fe] (199 aa).

The Fe cation site is built by His27, His79, Asp161, and His165.

This sequence belongs to the iron/manganese superoxide dismutase family. Homodimer. The cofactor is Fe cation.

The enzyme catalyses 2 superoxide + 2 H(+) = H2O2 + O2. Destroys superoxide anion radicals which are normally produced within the cells and which are toxic to biological systems. This is Superoxide dismutase [Fe] (sodB) from Synechocystis sp. (strain ATCC 27184 / PCC 6803 / Kazusa).